A 216-amino-acid polypeptide reads, in one-letter code: Adenylate kinase (216 aa).

Residue Gly10–Thr15 participates in ATP binding. An NMP region spans residues Ser30–Val59. AMP contacts are provided by residues Thr31, Arg36, Ala57 to Val59, Gly85 to Arg88, and Gln92. The interval Gly126–Asp163 is LID. Position 127 (Arg127) interacts with ATP. Residues Cys130, Cys133, Cys150, and Cys153 each contribute to the Zn(2+) site. Residues Arg160 and Arg171 each contribute to the AMP site. Lys199 lines the ATP pocket.

The protein belongs to the adenylate kinase family. As to quaternary structure, monomer.

It is found in the cytoplasm. The catalysed reaction is AMP + ATP = 2 ADP. It participates in purine metabolism; AMP biosynthesis via salvage pathway; AMP from ADP: step 1/1. Catalyzes the reversible transfer of the terminal phosphate group between ATP and AMP. Plays an important role in cellular energy homeostasis and in adenine nucleotide metabolism. This is Adenylate kinase from Syntrophotalea carbinolica (strain DSM 2380 / NBRC 103641 / GraBd1) (Pelobacter carbinolicus).